A 309-amino-acid chain; its full sequence is Foldase protein PrsA (309 aa).

A signal peptide spans 1–22 (MKTRSKLAAGFLTLMSVATLAA). A lipid anchor (N-palmitoyl cysteine) is attached at C23. C23 is lipidated: S-diacylglycerol cysteine. In terms of domain architecture, PpiC spans 146 to 241 (TPETSVQVIK…TSYYIIKVTD (96 aa)).

This sequence belongs to the PrsA family.

It localises to the cell membrane. The catalysed reaction is [protein]-peptidylproline (omega=180) = [protein]-peptidylproline (omega=0). Plays a major role in protein secretion by helping the post-translocational extracellular folding of several secreted proteins. The protein is Foldase protein PrsA of Streptococcus agalactiae serotype III (strain NEM316).